A 206-amino-acid polypeptide reads, in one-letter code: N-(5'-phosphoribosyl)anthranilate isomerase (206 aa).

It belongs to the TrpF family.

The enzyme catalyses N-(5-phospho-beta-D-ribosyl)anthranilate = 1-(2-carboxyphenylamino)-1-deoxy-D-ribulose 5-phosphate. It participates in amino-acid biosynthesis; L-tryptophan biosynthesis; L-tryptophan from chorismate: step 3/5. This Pseudomonas putida (strain ATCC 47054 / DSM 6125 / CFBP 8728 / NCIMB 11950 / KT2440) protein is N-(5'-phosphoribosyl)anthranilate isomerase.